Consider the following 179-residue polypeptide: Crossover junction endodeoxyribonuclease RuvC (179 aa).

Residues Asp-12, Glu-72, and Asp-144 contribute to the active site. Residues Asp-12, Glu-72, and Asp-144 each coordinate Mg(2+).

Belongs to the RuvC family. Homodimer which binds Holliday junction (HJ) DNA. The HJ becomes 2-fold symmetrical on binding to RuvC with unstacked arms; it has a different conformation from HJ DNA in complex with RuvA. In the full resolvosome a probable DNA-RuvA(4)-RuvB(12)-RuvC(2) complex forms which resolves the HJ. The cofactor is Mg(2+).

The protein resides in the cytoplasm. The enzyme catalyses Endonucleolytic cleavage at a junction such as a reciprocal single-stranded crossover between two homologous DNA duplexes (Holliday junction).. Its function is as follows. The RuvA-RuvB-RuvC complex processes Holliday junction (HJ) DNA during genetic recombination and DNA repair. Endonuclease that resolves HJ intermediates. Cleaves cruciform DNA by making single-stranded nicks across the HJ at symmetrical positions within the homologous arms, yielding a 5'-phosphate and a 3'-hydroxyl group; requires a central core of homology in the junction. The consensus cleavage sequence is 5'-(A/T)TT(C/G)-3'. Cleavage occurs on the 3'-side of the TT dinucleotide at the point of strand exchange. HJ branch migration catalyzed by RuvA-RuvB allows RuvC to scan DNA until it finds its consensus sequence, where it cleaves and resolves the cruciform DNA. The sequence is that of Crossover junction endodeoxyribonuclease RuvC from Dechloromonas aromatica (strain RCB).